The chain runs to 137 residues: Mandibular organ-inhibiting hormone (137 aa).

An N-terminal signal peptide occupies residues 1-26 (MTTKCTVMAVVLAACICLQVLPQAYG). Q63 carries the post-translational modification Pyrrolidone carboxylic acid. Cystine bridges form between C69–C105, C85–C101, and C88–C114. V134 is modified (valine amide).

It belongs to the arthropod CHH/MIH/GIH/VIH hormone family. As to expression, produced by the medulla terminalis X-organ in the eyestalks and transported to the sinus gland where it is stored and released.

Its subcellular location is the secreted. Its function is as follows. Represses the synthesis of methyl farnesoate, the precursor of insect juvenile hormone III in the mandibular organ. Also has hyperglycemic activity. This is Mandibular organ-inhibiting hormone from Libinia emarginata (Portly spider crab).